The primary structure comprises 81 residues: Consomatin Le1 (81 aa).

The signal sequence occupies residues 1–22 (MQTAYWVMVMMMVWITAPLSEG). Positions 23 to 57 (GKPNDVIRGLVPDDLTPQLILRSLISRRRSDKDVR) are excised as a propeptide. At Glu-58 the chain carries 4-carboxyglutamate. Cys-62 and Cys-67 form a disulfide bridge. Trp-64 is subject to D-tryptophan. Pro-69 carries the 4-hydroxyproline modification. Residues 71–81 (LWRRHDLKGKD) constitute a propeptide that is removed on maturation.

Belongs to the conotoxin C superfamily. Consomatin family. In terms of tissue distribution, expressed by the venom duct.

The protein resides in the secreted. In terms of biological role, moderately activates human somatostatin receptors (SSTR) with a preferential activation of SSTR1 and SSTR4. In vivo, does not cause behavioral changes in mice within a few minutes of intracranial injection, but causes a progressive loss of movement thereafter. Four to five hours after injection, mice recover, even with the highest dose tested. Shows antinociception and antihyperalgesia activities in two mouse models of acute pain, most probably by acting outside the central nervous system. The sequence is that of Consomatin Le1 from Conus lenavati (Cone snail).